The following is a 1423-amino-acid chain: Guanine nucleotide exchange factor subunit RIC1 (1423 aa).

WD repeat units follow at residues 64–103 (TQFG…GDKY) and 304–343 (NKTG…LICT). Positions 437-448 (ASQTQNPRSSST) are enriched in polar residues. The tract at residues 437 to 463 (ASQTQNPRSSSTHSEHKPSREKSPFAD) is disordered. Basic and acidic residues predominate over residues 449–460 (HSEHKPSREKSP). Thr992 and Thr996 each carry phosphothreonine. Phosphoserine is present on residues Ser1015, Ser1017, Ser1019, Ser1037, and Ser1172. A disordered region spans residues 1355-1423 (PDAFQPITMG…QDGTYDCSVS (69 aa)). Residues 1379–1397 (GSSSHGSIPQGEVGSSNMV) show a composition bias toward polar residues. Acidic residues predominate over residues 1404-1413 (TAQAEEEEPF).

This sequence belongs to the RIC1 family. In terms of assembly, forms a complex with RGP1; the interaction enhances RAB6A GTPase activity. Interacts (via central domain) with RGP1. Interacts with RAB6A; the interaction is direct with a preference for RAB6A-GDP. Interacts (via C-terminus domain) with RAB33B; the interaction is direct with a preference for RAB33B-GTP. Interacts with GJA1. Present in kidney and various cell lines (at protein level). Widely expressed at low level.

The protein resides in the cytoplasm. The protein localises to the cytosol. It localises to the membrane. The RIC1-RGP1 complex acts as a guanine nucleotide exchange factor (GEF), which activates RAB6A by exchanging bound GDP for free GTP, and may thereby be required for efficient fusion of endosome-derived vesicles with the Golgi compartment. The RIC1-RGP1 complex participates in the recycling of mannose-6-phosphate receptors. Required for phosphorylation and localization of GJA1. Is a regulator of procollagen transport and secretion, and is required for correct cartilage morphogenesis and development of the craniofacial skeleton. This Homo sapiens (Human) protein is Guanine nucleotide exchange factor subunit RIC1.